Consider the following 107-residue polypeptide: Phosphoribosyl-ATP pyrophosphatase (107 aa).

Belongs to the PRA-PH family.

It localises to the cytoplasm. It catalyses the reaction 1-(5-phospho-beta-D-ribosyl)-ATP + H2O = 1-(5-phospho-beta-D-ribosyl)-5'-AMP + diphosphate + H(+). Its pathway is amino-acid biosynthesis; L-histidine biosynthesis; L-histidine from 5-phospho-alpha-D-ribose 1-diphosphate: step 2/9. This Bacillus cereus (strain AH187) protein is Phosphoribosyl-ATP pyrophosphatase.